Here is a 349-residue protein sequence, read N- to C-terminus: Thylakoid lumenal 29 kDa protein, chloroplastic (349 aa).

Serine 155 is subject to Phosphoserine.

It belongs to the peroxidase family.

It is found in the plastid. It localises to the chloroplast thylakoid lumen. The chain is Thylakoid lumenal 29 kDa protein, chloroplastic (TL29) from Arabidopsis thaliana (Mouse-ear cress).